Reading from the N-terminus, the 1093-residue chain is TATA element modulatory factor (1093 aa).

Disordered regions lie at residues 38–80 (WAET…SPKA) and 108–189 (TIQK…DMKV). The segment covering 51-70 (SPVSGGWDTSTWGLKSNTEP) has biased composition (polar residues). A phosphoserine mark is found at Ser-72, Ser-77, Ser-112, and Ser-136. Over residues 123 to 137 (QRPEEEVKSSLHESL) the composition is skewed to basic and acidic residues. Positions 139-158 (IGQSRTPETTESQVKDSSLC) are enriched in polar residues. Residues 173–187 (TEGKHEETVNKESDM) show a composition bias toward basic and acidic residues. A phosphoserine mark is found at Ser-199 and Ser-217. The span at 229–238 (PKEQKHEDRQ) shows a compositional bias: basic and acidic residues. Disordered stretches follow at residues 229 to 260 (PKEQ…SDIE) and 266 to 285 (SVIS…SKSS). Residues 246–257 (VSTFSSGTSTTS) are compositionally biased toward low complexity. A phosphoserine mark is found at Ser-328, Ser-330, Ser-333, Ser-338, Ser-344, Ser-413, Ser-542, Ser-925, and Ser-928. Positions 333–342 (SLDSRSVSEI) are interaction with Elongin BC complex. A coiled-coil region spans residues 439–922 (EALSEKEDVC…QETIKEKERK (484 aa)). The interval 919-939 (KERKPFSVSSTPTMSRSSSIS) is disordered. The span at 925–939 (SVSSTPTMSRSSSIS) shows a compositional bias: low complexity. At Thr-929 the chain carries Phosphothreonine. Ser-933 is modified (phosphoserine). Residues 984–1092 (SIIENLQSQL…QIDELLRQSL (109 aa)) are a coiled coil.

Interacts with TRNP1; may regulate TRNP1 proteasomal degradation. Component of the SNF/SWI transcription factor complexes. Interacts with RAB6A. Interacts with STAT3 and FER. Interacts with TCEB1. Post-translationally, phosphorylated by FER.

Its subcellular location is the cytoplasm. It localises to the nucleus. The protein resides in the golgi apparatus membrane. In terms of biological role, potential coactivator of the androgen receptor. Mediates STAT3 degradation. May play critical roles in two RAB6-dependent retrograde transport processes: one from endosomes to the Golgi and the other from the Golgi to the ER. This protein binds the HIV-1 TATA element and inhibits transcriptional activation by the TATA-binding protein (TBP). The sequence is that of TATA element modulatory factor (TMF1) from Homo sapiens (Human).